Consider the following 164-residue polypeptide: Phosphopantetheine adenylyltransferase (164 aa).

Serine 9 contacts substrate. ATP contacts are provided by residues 9–10 and histidine 17; that span reads SF. Residues lysine 41, leucine 74, and arginine 88 each coordinate substrate. Residues 89 to 91, glutamate 99, and 124 to 130 contribute to the ATP site; these read GIR and YAEVSST.

Belongs to the bacterial CoaD family. As to quaternary structure, homohexamer. Requires Mg(2+) as cofactor.

The protein localises to the cytoplasm. The catalysed reaction is (R)-4'-phosphopantetheine + ATP + H(+) = 3'-dephospho-CoA + diphosphate. It participates in cofactor biosynthesis; coenzyme A biosynthesis; CoA from (R)-pantothenate: step 4/5. Functionally, reversibly transfers an adenylyl group from ATP to 4'-phosphopantetheine, yielding dephospho-CoA (dPCoA) and pyrophosphate. This Chromobacterium violaceum (strain ATCC 12472 / DSM 30191 / JCM 1249 / CCUG 213 / NBRC 12614 / NCIMB 9131 / NCTC 9757 / MK) protein is Phosphopantetheine adenylyltransferase.